A 918-amino-acid chain; its full sequence is Sarcosine dehydrogenase, mitochondrial (918 aa).

The span at 1 to 13 (MASLSRALRVAAA) shows a compositional bias: low complexity. The transit peptide at 1–22 (MASLSRALRVAAAHPRQSPTRG) directs the protein to the mitochondrion. A disordered region spans residues 1-40 (MASLSRALRVAAAHPRQSPTRGMGPCNLSSAAGPTAEKSV). Lysine 38 carries the post-translational modification N6-succinyllysine. Histidine 108 carries the post-translational modification Tele-8alpha-FAD histidine. Lysine 173 carries the post-translational modification N6-acetyllysine; alternate. Lysine 173 is modified (N6-succinyllysine; alternate). An N6-succinyllysine mark is found at lysine 377 and lysine 391. Lysine 559 and lysine 775 each carry N6-acetyllysine. Phosphotyrosine is present on tyrosine 777. 3 positions are modified to N6-acetyllysine; alternate: lysine 802, lysine 884, and lysine 904. Lysine 802, lysine 884, and lysine 904 each carry N6-succinyllysine; alternate.

The protein belongs to the GcvT family. FAD is required as a cofactor. Expressed in pancreas, liver and kidney.

It localises to the mitochondrion matrix. It carries out the reaction (6S)-5,6,7,8-tetrahydrofolyl-(gamma-L-Glu)(n) + sarcosine + oxidized [electron-transfer flavoprotein] + H(+) = (6R)-5,10-methylenetetrahydrofolyl-(gamma-L-Glu)(n) + reduced [electron-transfer flavoprotein] + glycine. Its pathway is amine and polyamine degradation; sarcosine degradation; formaldehyde and glycine from sarcosine: step 1/1. Functionally, catalyzes the last step of the oxidative degradation of choline to glycine. Converts sarcosine into glycine. The sequence is that of Sarcosine dehydrogenase, mitochondrial from Homo sapiens (Human).